The primary structure comprises 197 residues: Proteasome subunit beta 1 (197 aa).

A propeptide spans 1 to 6 (removed in mature form; by autocatalysis); it reads MNRKTG. The active-site Nucleophile is Thr-7.

It belongs to the peptidase T1B family. The 20S proteasome core is composed of 14 alpha and 14 beta subunits that assemble into four stacked heptameric rings, resulting in a barrel-shaped structure. The two inner rings, each composed of seven catalytic beta subunits, are sandwiched by two outer rings, each composed of seven alpha subunits. The catalytic chamber with the active sites is on the inside of the barrel. Has a gated structure, the ends of the cylinder being occluded by the N-termini of the alpha-subunits. Is capped at one or both ends by the proteasome regulatory ATPase, PAN.

Its subcellular location is the cytoplasm. The enzyme catalyses Cleavage of peptide bonds with very broad specificity.. The formation of the proteasomal ATPase PAN-20S proteasome complex, via the docking of the C-termini of PAN into the intersubunit pockets in the alpha-rings, triggers opening of the gate for substrate entry. Interconversion between the open-gate and close-gate conformations leads to a dynamic regulation of the 20S proteasome proteolysis activity. Its function is as follows. Component of the proteasome core, a large protease complex with broad specificity involved in protein degradation. The sequence is that of Proteasome subunit beta 1 from Pyrococcus horikoshii (strain ATCC 700860 / DSM 12428 / JCM 9974 / NBRC 100139 / OT-3).